Here is a 174-residue protein sequence, read N- to C-terminus: Shikimate kinase 2 (174 aa).

Residue 12-17 (GCGKTT) participates in ATP binding. Mg(2+)-binding residues include threonine 16 and aspartate 32. Residues aspartate 34, arginine 58, and glycine 79 each coordinate substrate. The segment at 112 to 126 (RAYPEDDQRPSLTGK) is LID domain. Residue arginine 120 coordinates ATP. Arginine 139 contributes to the substrate binding site. Glutamine 155 contacts ATP.

This sequence belongs to the shikimate kinase family. AroL subfamily. In terms of assembly, monomer. Requires Mg(2+) as cofactor.

Its subcellular location is the cytoplasm. It carries out the reaction shikimate + ATP = 3-phosphoshikimate + ADP + H(+). It participates in metabolic intermediate biosynthesis; chorismate biosynthesis; chorismate from D-erythrose 4-phosphate and phosphoenolpyruvate: step 5/7. Catalyzes the specific phosphorylation of the 3-hydroxyl group of shikimic acid using ATP as a cosubstrate. The protein is Shikimate kinase 2 of Sodalis glossinidius (strain morsitans).